The primary structure comprises 30 residues: Trypsin inhibitor 2 (30 aa).

Cystine bridges form between Cys3–Cys20, Cys10–Cys22, and Cys16–Cys29.

This sequence belongs to the protease inhibitor I7 (squash-type serine protease inhibitor) family.

It is found in the secreted. Functionally, inhibits trypsin. The chain is Trypsin inhibitor 2 from Luffa aegyptiaca (Sponge gourd).